The sequence spans 288 residues: MGLFDRKEKYIRINPNRYVRNGVDHHVPEVPDDLFAKCPGCKQAIYQKDLGQAKICPNCSYAFRISAKERLDLTVDEGSFQELFTGIKTENPLNFPGYMEKLAATKEKTGLDEAVVTGVATIKGQKTALAIMDSNFIMASMGTVVGEKITKLFEYAILEKLPVVIFTASGGARMQEGIMSLMQMAKISAAVKRHSNAGLLYLTVLTDPTTGGVTASFAMQGDIILAEPQTLIGFAGRRVIENTVRETLPDDFQKAEFLQEHGFVDAIVKRTELADTIATLLSFHGGVQ.

One can recognise a CoA carboxyltransferase N-terminal domain in the interval 34-288; that stretch reads LFAKCPGCKQ…TLLSFHGGVQ (255 aa). The Zn(2+) site is built by Cys38, Cys41, Cys56, and Cys59. Residues 38–59 form a C4-type zinc finger; the sequence is CPGCKQAIYQKDLGQAKICPNC.

This sequence belongs to the AccD/PCCB family. Acetyl-CoA carboxylase is a heterohexamer composed of biotin carboxyl carrier protein (AccB), biotin carboxylase (AccC) and two subunits each of ACCase subunit alpha (AccA) and ACCase subunit beta (AccD). Zn(2+) serves as cofactor.

It is found in the cytoplasm. It carries out the reaction N(6)-carboxybiotinyl-L-lysyl-[protein] + acetyl-CoA = N(6)-biotinyl-L-lysyl-[protein] + malonyl-CoA. Its pathway is lipid metabolism; malonyl-CoA biosynthesis; malonyl-CoA from acetyl-CoA: step 1/1. In terms of biological role, component of the acetyl coenzyme A carboxylase (ACC) complex. Biotin carboxylase (BC) catalyzes the carboxylation of biotin on its carrier protein (BCCP) and then the CO(2) group is transferred by the transcarboxylase to acetyl-CoA to form malonyl-CoA. In Streptococcus thermophilus (strain CNRZ 1066), this protein is Acetyl-coenzyme A carboxylase carboxyl transferase subunit beta.